The following is a 131-amino-acid chain: Protein NEGATIVE REGULATOR OF RESISTANCE (131 aa).

Disordered stretches follow at residues 1-33 (MDAT…DEVS) and 51-131 (TRRL…RAPA). The Nuclear localization signal signature appears at 12 to 15 (KRKR). Residues 116-131 (PPSDAPATPRSARAPA) show a composition bias toward low complexity.

This sequence belongs to the NPR1-interactor family. As to quaternary structure, interacts with NPR1/NH1. Interacts with NPR2/NH2.

It localises to the nucleus. Its function is as follows. Acts as a negative regulator of disease resistance. Acts on basal resistance, age-related resistance and resistance mediated by the LRR receptor kinase XA21. Plants over-expressing NRR display enhanced susceptibility to the bacterial blight Xanthomonas oryzae pv. oryzae (Xoo). This Oryza sativa subsp. indica (Rice) protein is Protein NEGATIVE REGULATOR OF RESISTANCE.